Reading from the N-terminus, the 503-residue chain is Probable cytosol aminopeptidase (503 aa).

Residues lysine 274 and aspartate 279 each coordinate Mn(2+). Lysine 286 is a catalytic residue. Mn(2+) is bound by residues aspartate 297, aspartate 356, and glutamate 358. The active site involves arginine 360.

This sequence belongs to the peptidase M17 family. Mn(2+) serves as cofactor.

The protein localises to the cytoplasm. It carries out the reaction Release of an N-terminal amino acid, Xaa-|-Yaa-, in which Xaa is preferably Leu, but may be other amino acids including Pro although not Arg or Lys, and Yaa may be Pro. Amino acid amides and methyl esters are also readily hydrolyzed, but rates on arylamides are exceedingly low.. The catalysed reaction is Release of an N-terminal amino acid, preferentially leucine, but not glutamic or aspartic acids.. Functionally, presumably involved in the processing and regular turnover of intracellular proteins. Catalyzes the removal of unsubstituted N-terminal amino acids from various peptides. The polypeptide is Probable cytosol aminopeptidase (Burkholderia thailandensis (strain ATCC 700388 / DSM 13276 / CCUG 48851 / CIP 106301 / E264)).